The chain runs to 201 residues: Probable molybdenum cofactor guanylyltransferase (201 aa).

Residues 20-22 (LAG), Lys-32, Asp-77, and Asp-106 each bind GTP. Asp-106 provides a ligand contact to Mg(2+).

The protein belongs to the MobA family. It depends on Mg(2+) as a cofactor.

It localises to the cytoplasm. It carries out the reaction Mo-molybdopterin + GTP + H(+) = Mo-molybdopterin guanine dinucleotide + diphosphate. Its function is as follows. Transfers a GMP moiety from GTP to Mo-molybdopterin (Mo-MPT) cofactor (Moco or molybdenum cofactor) to form Mo-molybdopterin guanine dinucleotide (Mo-MGD) cofactor. In Aquifex aeolicus (strain VF5), this protein is Probable molybdenum cofactor guanylyltransferase.